The sequence spans 145 residues: Endoribonuclease YbeY (145 aa).

Residues H109, H113, and H119 each coordinate Zn(2+).

It belongs to the endoribonuclease YbeY family. Zn(2+) serves as cofactor.

The protein localises to the cytoplasm. Its function is as follows. Single strand-specific metallo-endoribonuclease involved in late-stage 70S ribosome quality control and in maturation of the 3' terminus of the 16S rRNA. The sequence is that of Endoribonuclease YbeY from Ruthia magnifica subsp. Calyptogena magnifica.